The chain runs to 125 residues: Small ribosomal subunit protein uS12 (125 aa).

Asp89 is subject to 3-methylthioaspartic acid.

The protein belongs to the universal ribosomal protein uS12 family. Part of the 30S ribosomal subunit. Contacts proteins S8 and S17. May interact with IF1 in the 30S initiation complex.

Its function is as follows. With S4 and S5 plays an important role in translational accuracy. Interacts with and stabilizes bases of the 16S rRNA that are involved in tRNA selection in the A site and with the mRNA backbone. Located at the interface of the 30S and 50S subunits, it traverses the body of the 30S subunit contacting proteins on the other side and probably holding the rRNA structure together. The combined cluster of proteins S8, S12 and S17 appears to hold together the shoulder and platform of the 30S subunit. In Cupriavidus necator (strain ATCC 17699 / DSM 428 / KCTC 22496 / NCIMB 10442 / H16 / Stanier 337) (Ralstonia eutropha), this protein is Small ribosomal subunit protein uS12.